The sequence spans 143 residues: Small ribosomal subunit protein uS11c (143 aa).

The protein belongs to the universal ribosomal protein uS11 family. As to quaternary structure, part of the 30S ribosomal subunit.

Its subcellular location is the plastid. The protein resides in the chloroplast. This chain is Small ribosomal subunit protein uS11c, found in Cenchrus americanus (Pearl millet).